A 170-amino-acid polypeptide reads, in one-letter code: UPF0220 protein C8D2.02c (170 aa).

The next 4 membrane-spanning stretches (helical) occupy residues 23-43 (LGVYFAGIMFASAVWVFVDAA), 54-74 (LHITFIDWIPFLCSILGIVIV), 101-121 (ILFIGFALLAGGLGGSFTVFI), and 136-156 (MGSANIISNILFMISATALWI).

It belongs to the UPF0220 family.

The protein localises to the membrane. In Schizosaccharomyces pombe (strain 972 / ATCC 24843) (Fission yeast), this protein is UPF0220 protein C8D2.02c.